Reading from the N-terminus, the 315-residue chain is tRNA dimethylallyltransferase (315 aa).

9–16 (GPTASGKT) contacts ATP. 11–16 (TASGKT) contacts substrate. Interaction with substrate tRNA regions lie at residues 34 to 37 (DSLL) and 158 to 162 (QRIQR).

It belongs to the IPP transferase family. In terms of assembly, monomer. Mg(2+) is required as a cofactor.

The enzyme catalyses adenosine(37) in tRNA + dimethylallyl diphosphate = N(6)-dimethylallyladenosine(37) in tRNA + diphosphate. Catalyzes the transfer of a dimethylallyl group onto the adenine at position 37 in tRNAs that read codons beginning with uridine, leading to the formation of N6-(dimethylallyl)adenosine (i(6)A). The sequence is that of tRNA dimethylallyltransferase from Acidithiobacillus ferrooxidans (strain ATCC 53993 / BNL-5-31) (Leptospirillum ferrooxidans (ATCC 53993)).